A 440-amino-acid chain; its full sequence is Adenylosuccinate synthetase (440 aa).

Residues Gly14–Lys20 and Gly42–Thr44 each bind GTP. Asp15 acts as the Proton acceptor in catalysis. Residues Asp15 and Gly42 each coordinate Mg(2+). Residues Asp15–Lys18, Asn40–His43, Thr131, Arg145, Gln226, Thr241, and Arg313 each bind IMP. His43 (proton donor) is an active-site residue. Ala309–Arg315 serves as a coordination point for substrate. Residues Arg315, Lys341–Asp343, and Ser423–Gly425 contribute to the GTP site.

It belongs to the adenylosuccinate synthetase family. In terms of assembly, homodimer. The cofactor is Mg(2+).

Its subcellular location is the cytoplasm. The enzyme catalyses IMP + L-aspartate + GTP = N(6)-(1,2-dicarboxyethyl)-AMP + GDP + phosphate + 2 H(+). The protein operates within purine metabolism; AMP biosynthesis via de novo pathway; AMP from IMP: step 1/2. Its function is as follows. Plays an important role in the de novo pathway of purine nucleotide biosynthesis. Catalyzes the first committed step in the biosynthesis of AMP from IMP. This Hydrogenovibrio crunogenus (strain DSM 25203 / XCL-2) (Thiomicrospira crunogena) protein is Adenylosuccinate synthetase.